The primary structure comprises 234 residues: Small ribosomal subunit protein eS4 (234 aa).

The S4 RNA-binding domain maps to 39 to 102 (MPLVVVLRDL…NANYRVVIGM (64 aa)).

The protein belongs to the eukaryotic ribosomal protein eS4 family.

This Methanocella arvoryzae (strain DSM 22066 / NBRC 105507 / MRE50) protein is Small ribosomal subunit protein eS4.